The sequence spans 708 residues: Exocyst complex component 5 (708 aa).

At Ala2 the chain carries N-acetylalanine. Residues 40–101 are a coiled coil; the sequence is KRLLEEFVNH…AFQHFQELDE (62 aa). Phosphothreonine is present on residues Thr122, Thr395, and Thr405. Ser412 is subject to Phosphoserine.

It belongs to the SEC10 family. The exocyst complex is composed of EXOC1, EXOC2, EXOC3, EXOC4, EXOC5, EXOC6, EXOC7 and EXOC8. Interacts with EXOC3L1. Ubiquitous.

The protein resides in the cytoplasm. It localises to the midbody. Its function is as follows. Component of the exocyst complex involved in the docking of exocytic vesicles with fusion sites on the plasma membrane. The sequence is that of Exocyst complex component 5 (EXOC5) from Homo sapiens (Human).